A 404-amino-acid polypeptide reads, in one-letter code: MRRYLRVVGLCLACGFCSLLYAFSQLAVSLEEGAAGGRRPQAAVVSWLADGGRGTGRGAGSAGPGRTGRYDMKTRPDEKMHLAVVACGERLEETVTMLKSALIFSIKPLHVHIFAEDQLHDSFKDRLASWSFLRRFDYSLYPITFPGDSAADWKKLFKPCASQRLFLPLILKEVDSLLYVDTDILFLRPVDDIWSLLKKFNSTQIAAMAPEHEEPRIGWYNRFARHPYYGRTGVNSGVMLMNMTRMRRKYFKNDMTTARLQWGDILMPLLKKYKLNITWGDQDLLNIVFSHNPESLFVFPCQWNYRPDHCIYGSNCREAEEEGVFILHGNRGVYHDDKQPAFRAVYEALRNCSLEDDSVRSLLKPLELELQKTVHTYCGKTYKIFIKQLTKSIRNRYDTPPKER.

Over 1–6 (MRRYLR) the chain is Cytoplasmic. A helical; Signal-anchor for type II membrane protein membrane pass occupies residues 7–29 (VVGLCLACGFCSLLYAFSQLAVS). At 30 to 404 (LEEGAAGGRR…NRYDTPPKER (375 aa)) the chain is on the lumenal side. Asn201 carries N-linked (GlcNAc...) asparagine glycosylation.

Belongs to the glycosyltransferase 8 family.

It localises to the membrane. The enzyme catalyses 3-O-(beta-D-glucosyl)-L-seryl-[EGF-like domain protein] + UDP-alpha-D-xylose = 3-O-[alpha-D-xylosyl-(1-&gt;3)-beta-D-glucosyl]-L-seryl-[EGF-like domain protein] + UDP + H(+). In terms of biological role, glycosyltransferase which elongates the O-linked glucose attached to EGF-like repeats in the extracellular domain of Notch proteins by catalyzing the addition of xylose. The chain is Glucoside xylosyltransferase 1 (Gxylt1) from Mus musculus (Mouse).